Consider the following 630-residue polypeptide: Golgi apyrase (630 aa).

Residues M1 to K500 are Lumenal-facing. Catalysis depends on E152, which acts as the Proton acceptor. A helical membrane pass occupies residues G501–F517. The Cytoplasmic portion of the chain corresponds to H518–D630. The segment at S586–L606 is disordered.

Belongs to the GDA1/CD39 NTPase family. Interacts with activator subunit VMA13 of vacuolar H(+)-ATPase. Interacts with CDC55; this interaction is disrupted by adenovirus E4orf4, which remains associated with both YND1 and CDC55. The cofactor is Ca(2+). Mg(2+) is required as a cofactor. It depends on Mn(2+) as a cofactor.

It is found in the golgi apparatus. It localises to the membrane. The catalysed reaction is a ribonucleoside 5'-triphosphate + 2 H2O = a ribonucleoside 5'-phosphate + 2 phosphate + 2 H(+). It participates in protein modification; protein glycosylation. Activity is inhibited both by interaction with VMA13 and by V-ATPase acidification of the lumen. The activity of VMA13 is not required for YND1 inhibition. Its function is as follows. Catalyzes the hydrolysis of phosphoanhydride bonds of nucleoside tri- and di-phosphates. Has equal high activity toward ADP/ATP, GDP/GTP, and UDP/UTP and approximately 50% less toward CDP/CTP and thiamine pyrophosphate. Has no activity toward GMP. Required for Golgi glycosylation and cell wall integrity. Together with CDC55, required for adenovirus E4orf4 (early region 4 open reading frame 4) induced toxicity, the apyrase activity is not required for this function. Plays a role in sphingolipid synthesis. The chain is Golgi apyrase (YND1) from Saccharomyces cerevisiae (strain ATCC 204508 / S288c) (Baker's yeast).